A 252-amino-acid polypeptide reads, in one-letter code: Sulfoacetaldehyde reductase 2 (252 aa).

6-30 (LITGATSGFGRAAARRFADAGWSLI) is a binding site for NADP(+). Serine 139 contacts substrate. Tyrosine 152 functions as the Proton acceptor in the catalytic mechanism.

It belongs to the short-chain dehydrogenases/reductases (SDR) family. Homodimer and heterotetramer.

It carries out the reaction 2-hydroxyethane-1-sulfonate + NADP(+) = sulfoacetaldehyde + NADPH + H(+). The protein operates within organosulfur degradation. Catalyzes the formation of isethionate from 2-sulfoacetaldehyde in the deaminative pathway of taurine. Constitutively expressed enzyme that only mediates a small part of the activity observed in taurine-grown cells. In Chromohalobacter salexigens (strain ATCC BAA-138 / DSM 3043 / CIP 106854 / NCIMB 13768 / 1H11), this protein is Sulfoacetaldehyde reductase 2 (isfD2).